A 207-amino-acid chain; its full sequence is Outer-membrane lipoprotein LolB (207 aa).

The signal sequence occupies residues Met1–Ala21. The N-palmitoyl cysteine moiety is linked to residue Cys22. Cys22 is lipidated: S-diacylglycerol cysteine.

This sequence belongs to the LolB family. As to quaternary structure, monomer.

It localises to the cell outer membrane. Plays a critical role in the incorporation of lipoproteins in the outer membrane after they are released by the LolA protein. This chain is Outer-membrane lipoprotein LolB, found in Shigella boydii serotype 18 (strain CDC 3083-94 / BS512).